The chain runs to 318 residues: Malonyl CoA-acyl carrier protein transacylase, mitochondrial (318 aa).

This sequence belongs to the FabD family.

Its subcellular location is the mitochondrion. The catalysed reaction is holo-[ACP] + malonyl-CoA = malonyl-[ACP] + CoA. Its pathway is lipid metabolism; fatty acid biosynthesis. Functionally, involved in biosynthesis of fatty acids in mitochondria. In Schizosaccharomyces pombe (strain 972 / ATCC 24843) (Fission yeast), this protein is Malonyl CoA-acyl carrier protein transacylase, mitochondrial (mct1).